We begin with the raw amino-acid sequence, 374 residues long: Glutamate 5-kinase (374 aa).

Lys17 contributes to the ATP binding site. Residues Ser57, Asp144, and Asn156 each coordinate substrate. ATP contacts are provided by residues 176–177 (SD) and 218–224 (TGGMVTK). A PUA domain is found at 280 to 358 (QGALVLDDGA…RELARELGPA (79 aa)).

It belongs to the glutamate 5-kinase family.

Its subcellular location is the cytoplasm. It carries out the reaction L-glutamate + ATP = L-glutamyl 5-phosphate + ADP. The protein operates within amino-acid biosynthesis; L-proline biosynthesis; L-glutamate 5-semialdehyde from L-glutamate: step 1/2. In terms of biological role, catalyzes the transfer of a phosphate group to glutamate to form L-glutamate 5-phosphate. The polypeptide is Glutamate 5-kinase (Streptomyces coelicolor (strain ATCC BAA-471 / A3(2) / M145)).